Here is a 240-residue protein sequence, read N- to C-terminus: Putative tyrosine phosphatase 067L (240 aa).

The Tyrosine-protein phosphatase domain maps to 3-151 (QASFFVADKA…EREWPLNPTQ (149 aa)). The active-site Phosphocysteine intermediate is the Cys96.

This sequence belongs to the protein-tyrosine phosphatase family.

The catalysed reaction is O-phospho-L-tyrosyl-[protein] + H2O = L-tyrosyl-[protein] + phosphate. This Aedes vexans (Inland floodwater mosquito) protein is Putative tyrosine phosphatase 067L.